The chain runs to 392 residues: Nuclear speckle splicing regulatory protein 1 homolog (392 aa).

Disordered regions lie at residues 1 to 73 (MASK…IFDY), 113 to 169 (RQLE…AFND), and 187 to 357 (LLND…ARLD). 5 stretches are compositionally biased toward basic and acidic residues: residues 54 to 65 (KAAEREHQKAEA), 113 to 132 (RQLE…REKE), 149 to 160 (KQQEEVKKHREQ), 205 to 238 (QKNV…KSIY), and 313 to 357 (KSIE…ARLD). Residues 76 to 132 (NYDEIQAIKNEKKEEARKADKNRESKYAENIIKAHARRQLEQFSREERQQLREREKE) adopt a coiled-coil conformation.

This sequence belongs to the NSRP1 family. In terms of tissue distribution, expressed in the intestine, nervous system and head neurons in both larvae and adults. Expressed in the distal tip cell.

Its subcellular location is the cytoplasm. The protein localises to the nucleus. Its function is as follows. Required for the cessation of distal tip cell migration at the end of larval morphogenesis. In Caenorhabditis elegans, this protein is Nuclear speckle splicing regulatory protein 1 homolog (ccdc-55).